A 368-amino-acid polypeptide reads, in one-letter code: MNKTITALAIMMASFAANASVLPETPVPFKSGTGAIDNDTVYIGLGSAGTAWYKLDTQAKDKKWTALAAFPGGPRDQATSAFIDGNLYVFGGIGKNREGLTQVFNDVHKYNPKTNSWVKLMSHAPMGMAGHVTFVHNGKAYVTGGVNQNIFNGYFEDLNEAGKDSTAVDKINAYYFDKKAEDYFFNKFLLSFDPSTQQWSYAGESPWYGTAGAAVVNKGDKTWLINGEAKPGLRTDAVFELDFTGNNLKWNKLAPVSSPDGVAGGFAGISNDSLIFAGGAGFKGSRENYQHGKNYAHEGLKKSYSTDIHLWHNGKWDKSGELSQGRAYGVSLPWNNSLLIIGGETAGGKAVTDSVLISVKDNKVTVQN.

The first 19 residues, 1-19 (MNKTITALAIMMASFAANA), serve as a signal peptide directing secretion. Kelch repeat units follow at residues 40–84 (TVYI…AFID), 86–137 (NLYV…FVHN), 139–173 (KAYV…KINA), 174–219 (YYFD…VNKG), 222–265 (TWLI…VAGG), 287–336 (ENYQ…PWNN), and 338–367 (LLII…VTVQ). Catalysis depends on Glu228, which acts as the Proton acceptor.

This sequence belongs to the NanM family. Homodimer.

The protein localises to the periplasm. It carries out the reaction N-acetyl-alpha-neuraminate = N-acetyl-beta-neuraminate. Converts alpha-N-acetylneuranimic acid (Neu5Ac) to the beta-anomer, accelerating the equilibrium between the alpha- and beta-anomers. Probably facilitates sialidase-negative bacteria to compete successfully for limited amounts of extracellular Neu5Ac, which is likely taken up in the beta-anomer. In addition, the rapid removal of sialic acid from solution might be advantageous to the bacterium to damp down host responses. This Shigella boydii serotype 4 (strain Sb227) protein is N-acetylneuraminate epimerase.